The primary structure comprises 421 residues: Enolase 1 (421 aa).

A (2R)-2-phosphoglycerate-binding site is contributed by Gln-164. Glu-206 (proton donor) is an active-site residue. Residues Asp-243, Glu-287, and Asp-314 each coordinate Mg(2+). 4 residues coordinate (2R)-2-phosphoglycerate: Lys-339, Arg-368, Ser-369, and Lys-390. Lys-339 functions as the Proton acceptor in the catalytic mechanism.

It belongs to the enolase family. Component of the RNA degradosome, a multiprotein complex involved in RNA processing and mRNA degradation. Mg(2+) is required as a cofactor.

It localises to the cytoplasm. Its subcellular location is the secreted. It is found in the cell surface. It catalyses the reaction (2R)-2-phosphoglycerate = phosphoenolpyruvate + H2O. Its pathway is carbohydrate degradation; glycolysis; pyruvate from D-glyceraldehyde 3-phosphate: step 4/5. Its function is as follows. Catalyzes the reversible conversion of 2-phosphoglycerate (2-PG) into phosphoenolpyruvate (PEP). It is essential for the degradation of carbohydrates via glycolysis. This is Enolase 1 from Methylococcus capsulatus (strain ATCC 33009 / NCIMB 11132 / Bath).